We begin with the raw amino-acid sequence, 497 residues long: MGLPALLASALCTFVLPLLLFLAALKLWDLYCVSSRDRSCALPLPPGTMGFPFFGETLQMVLQRRKFLQMKRRKYGFIYKTHLFGRPTVRVMGADNVRRILLGEHRLVSVHWPASVRTILGAGCLSNLHDSSHKQRKKVIMQAFSREALQCYVLVIAEEVSSCLEQWLSCGERGLLVYPEVKRLMFRIAMRILLGCEPGPAGGGEDEQQLVEAFEEMTRNLFSLPIDVPFSGLYRGVKARNLIHARIEENIRAKIRRLQATEPDGGCKDALQLLIEHSWERGERLDMQALKQSSTELLFGGHETTASAATSLITYLGLYPHVLQKVREEIKSKGLLCKSNQDNKLDMETLEQLKYIGCVIKETLRLNPPVPGGFRVALKTFELNGYQIPKGWNVIYSICDTHDVADIFTNKEEFNPDRFIVPHPEDASRFSFIPFGGGLRSCVGKEFAKILLKIFTVELARHCDWQLLNGPPTMKTSPTVYPVDNLPARFTYFQGDI.

Cys442 serves as a coordination point for heme.

The protein belongs to the cytochrome P450 family. Requires heme as cofactor.

It is found in the endoplasmic reticulum membrane. It localises to the microsome membrane. The enzyme catalyses all-trans-retinoate + reduced [NADPH--hemoprotein reductase] + O2 = all-trans-(4S)-hydroxyretinoate + oxidized [NADPH--hemoprotein reductase] + H2O + H(+). The catalysed reaction is all-trans-(4S)-hydroxyretinoate + reduced [NADPH--hemoprotein reductase] + O2 = all-trans-(4S,16)-dihydroxyretinoate + oxidized [NADPH--hemoprotein reductase] + H2O + H(+). It carries out the reaction all-trans-retinoate + reduced [NADPH--hemoprotein reductase] + O2 = all-trans-18-hydroxyretinoate + oxidized [NADPH--hemoprotein reductase] + H2O + H(+). Functionally, a cytochrome P450 monooxygenase involved in the metabolism of retinoates (RAs), the active metabolites of vitamin A, and critical signaling molecules in animals. RAs exist as at least four different isomers: all-trans-RA (atRA), 9-cis-RA, 13-cis-RA, and 9,13-dicis-RA, where atRA is considered to be the biologically active isomer, although 9-cis-RA and 13-cis-RA also have activity. Catalyzes the hydroxylation of atRA primarily at C-4 and C-18, thereby contributing to the regulation of atRA homeostasis and signaling. Hydroxylation of atRA limits its biological activity and initiates a degradative process leading to its eventual elimination. Involved in the convertion of atRA to all-trans-4-oxo-RA. Able to metabolize other RAs such as 9-cis, 13-cis and 9,13-di-cis RA. Can oxidize all-trans-13,14-dihydroretinoate (DRA) to metabolites which could include all-trans-4-oxo-DRA, all-trans-4-hydroxy-DRA, all-trans-5,8-epoxy-DRA, and all-trans-18-hydroxy-DRA. May play a role in the oxidative metabolism of xenobiotics such as tazarotenic acid. This Mus musculus (Mouse) protein is Cytochrome P450 26A1.